A 98-amino-acid polypeptide reads, in one-letter code: Integration host factor subunit alpha (98 aa).

The tract at residues 51 to 71 (NFDLRDKNERPGRNPKTGEDI) is disordered. Over residues 53–69 (DLRDKNERPGRNPKTGE) the composition is skewed to basic and acidic residues.

It belongs to the bacterial histone-like protein family. In terms of assembly, heterodimer of an alpha and a beta chain.

In terms of biological role, this protein is one of the two subunits of integration host factor, a specific DNA-binding protein that functions in genetic recombination as well as in transcriptional and translational control. In Vibrio cholerae serotype O1 (strain ATCC 39541 / Classical Ogawa 395 / O395), this protein is Integration host factor subunit alpha.